The chain runs to 181 residues: ATP synthase subunit delta (181 aa).

It belongs to the ATPase delta chain family. As to quaternary structure, F-type ATPases have 2 components, F(1) - the catalytic core - and F(0) - the membrane proton channel. F(1) has five subunits: alpha(3), beta(3), gamma(1), delta(1), epsilon(1). F(0) has three main subunits: a(1), b(2) and c(10-14). The alpha and beta chains form an alternating ring which encloses part of the gamma chain. F(1) is attached to F(0) by a central stalk formed by the gamma and epsilon chains, while a peripheral stalk is formed by the delta and b chains.

It is found in the cell inner membrane. Its function is as follows. F(1)F(0) ATP synthase produces ATP from ADP in the presence of a proton or sodium gradient. F-type ATPases consist of two structural domains, F(1) containing the extramembraneous catalytic core and F(0) containing the membrane proton channel, linked together by a central stalk and a peripheral stalk. During catalysis, ATP synthesis in the catalytic domain of F(1) is coupled via a rotary mechanism of the central stalk subunits to proton translocation. In terms of biological role, this protein is part of the stalk that links CF(0) to CF(1). It either transmits conformational changes from CF(0) to CF(1) or is implicated in proton conduction. This chain is ATP synthase subunit delta, found in Chlorobium luteolum (strain DSM 273 / BCRC 81028 / 2530) (Pelodictyon luteolum).